Consider the following 352-residue polypeptide: Holliday junction branch migration complex subunit RuvB (352 aa).

The interval 4–185 is large ATPase domain (RuvB-L); it reads ADRLIAATGP…FGIVQRLEFY (182 aa). ATP is bound by residues I24, R25, G66, K69, T70, T71, 132–134, R175, Y185, and R222; that span reads EDF. T70 lines the Mg(2+) pocket. A small ATPAse domain (RuvB-S) region spans residues 186 to 256; sequence STADLATIVS…IADLALNLLD (71 aa). Residues 259-352 form a head domain (RuvB-H) region; that stretch reads ERGFDHQDRR…VDEFLDAVDD (94 aa). Positions 295, 314, and 319 each coordinate DNA.

It belongs to the RuvB family. As to quaternary structure, homohexamer. Forms an RuvA(8)-RuvB(12)-Holliday junction (HJ) complex. HJ DNA is sandwiched between 2 RuvA tetramers; dsDNA enters through RuvA and exits via RuvB. An RuvB hexamer assembles on each DNA strand where it exits the tetramer. Each RuvB hexamer is contacted by two RuvA subunits (via domain III) on 2 adjacent RuvB subunits; this complex drives branch migration. In the full resolvosome a probable DNA-RuvA(4)-RuvB(12)-RuvC(2) complex forms which resolves the HJ.

It localises to the cytoplasm. The catalysed reaction is ATP + H2O = ADP + phosphate + H(+). The RuvA-RuvB-RuvC complex processes Holliday junction (HJ) DNA during genetic recombination and DNA repair, while the RuvA-RuvB complex plays an important role in the rescue of blocked DNA replication forks via replication fork reversal (RFR). RuvA specifically binds to HJ cruciform DNA, conferring on it an open structure. The RuvB hexamer acts as an ATP-dependent pump, pulling dsDNA into and through the RuvAB complex. RuvB forms 2 homohexamers on either side of HJ DNA bound by 1 or 2 RuvA tetramers; 4 subunits per hexamer contact DNA at a time. Coordinated motions by a converter formed by DNA-disengaged RuvB subunits stimulates ATP hydrolysis and nucleotide exchange. Immobilization of the converter enables RuvB to convert the ATP-contained energy into a lever motion, pulling 2 nucleotides of DNA out of the RuvA tetramer per ATP hydrolyzed, thus driving DNA branch migration. The RuvB motors rotate together with the DNA substrate, which together with the progressing nucleotide cycle form the mechanistic basis for DNA recombination by continuous HJ branch migration. Branch migration allows RuvC to scan DNA until it finds its consensus sequence, where it cleaves and resolves cruciform DNA. This is Holliday junction branch migration complex subunit RuvB from Pseudomonas fluorescens (strain ATCC BAA-477 / NRRL B-23932 / Pf-5).